The chain runs to 390 residues: 1-deoxy-D-xylulose 5-phosphate reductoisomerase (390 aa).

Residues T18, G19, S20, I21, and N130 each coordinate NADPH. K131 provides a ligand contact to 1-deoxy-D-xylulose 5-phosphate. E132 serves as a coordination point for NADPH. D156 contacts Mn(2+). 1-deoxy-D-xylulose 5-phosphate is bound by residues S157, E158, S182, and H205. E158 is a binding site for Mn(2+). Position 211 (G211) interacts with NADPH. 1-deoxy-D-xylulose 5-phosphate is bound by residues S218, N223, K224, and E227. Position 227 (E227) interacts with Mn(2+).

This sequence belongs to the DXR family. Mg(2+) is required as a cofactor. The cofactor is Mn(2+).

It carries out the reaction 2-C-methyl-D-erythritol 4-phosphate + NADP(+) = 1-deoxy-D-xylulose 5-phosphate + NADPH + H(+). The protein operates within isoprenoid biosynthesis; isopentenyl diphosphate biosynthesis via DXP pathway; isopentenyl diphosphate from 1-deoxy-D-xylulose 5-phosphate: step 1/6. In terms of biological role, catalyzes the NADPH-dependent rearrangement and reduction of 1-deoxy-D-xylulose-5-phosphate (DXP) to 2-C-methyl-D-erythritol 4-phosphate (MEP). This chain is 1-deoxy-D-xylulose 5-phosphate reductoisomerase, found in Bacteroides thetaiotaomicron (strain ATCC 29148 / DSM 2079 / JCM 5827 / CCUG 10774 / NCTC 10582 / VPI-5482 / E50).